Reading from the N-terminus, the 434-residue chain is Gamma-enolase (434 aa).

S2 carries the post-translational modification N-acetylserine. Position 5 is an N6-acetyllysine (K5). Residue T26 is modified to Phosphothreonine. Residue S40 participates in Mg(2+) binding. Phosphotyrosine is present on Y44. K60 is modified (N6-acetyllysine; alternate). K60 is modified (N6-succinyllysine; alternate). At K64 the chain carries N6-acetyllysine. An N6-acetyllysine; alternate modification is found at K89. K89 is modified (N6-succinyllysine; alternate). Residues H158 and E167 each contribute to the substrate site. An N6-acetyllysine mark is found at K193, K197, and K199. K202 carries the post-translational modification N6-acetyllysine; alternate. A Glycyl lysine isopeptide (Lys-Gly) (interchain with G-Cter in SUMO2); alternate cross-link involves residue K202. E210 functions as the Proton donor in the catalytic mechanism. Residues K228 and K233 each carry the N6-acetyllysine; alternate modification. Position 228 is an N6-succinyllysine; alternate (K228). At K233 the chain carries N6-(2-hydroxyisobutyryl)lysine; alternate. A Mg(2+)-binding site is contributed by D245. K256 is subject to N6-acetyllysine. The residue at position 263 (S263) is a Phosphoserine. Y287 bears the Phosphotyrosine mark. S291 is modified (phosphoserine). Mg(2+) contacts are provided by E293 and D318. E293 and D318 together coordinate substrate. 2 positions are modified to N6-acetyllysine: K335 and K343. Catalysis depends on K343, which acts as the Proton acceptor. Residues 370–373 and K394 contribute to the substrate site; that span reads SHRS. At K406 the chain carries N6-acetyllysine.

Belongs to the enolase family. Mammalian enolase is composed of 3 isozyme subunits, alpha, beta and gamma, which can form homodimers or heterodimers which are cell-type and development-specific. It depends on Mg(2+) as a cofactor. The alpha/alpha homodimer is expressed in embryo and in most adult tissues. The alpha/beta heterodimer and the beta/beta homodimer are found in striated muscle, and the alpha/gamma heterodimer and the gamma/gamma homodimer in neurons.

It is found in the cytoplasm. The protein localises to the cell membrane. It catalyses the reaction (2R)-2-phosphoglycerate = phosphoenolpyruvate + H2O. Its pathway is carbohydrate degradation; glycolysis; pyruvate from D-glyceraldehyde 3-phosphate: step 4/5. Has neurotrophic and neuroprotective properties on a broad spectrum of central nervous system (CNS) neurons. Binds, in a calcium-dependent manner, to cultured neocortical neurons and promotes cell survival. In Homo sapiens (Human), this protein is Gamma-enolase (ENO2).